The primary structure comprises 101 residues: Small ribosomal subunit protein uS14 (101 aa).

Belongs to the universal ribosomal protein uS14 family. In terms of assembly, part of the 30S ribosomal subunit. Contacts proteins S3 and S10.

Binds 16S rRNA, required for the assembly of 30S particles and may also be responsible for determining the conformation of the 16S rRNA at the A site. In Actinobacillus pleuropneumoniae serotype 5b (strain L20), this protein is Small ribosomal subunit protein uS14.